We begin with the raw amino-acid sequence, 34 residues long: Photosystem II reaction center protein T (34 aa).

The chain crosses the membrane as a helical span at residues A3–F23.

It belongs to the PsbT family. As to quaternary structure, PSII is composed of 1 copy each of membrane proteins PsbA, PsbB, PsbC, PsbD, PsbE, PsbF, PsbH, PsbI, PsbJ, PsbK, PsbL, PsbM, PsbT, PsbY, PsbZ, Psb30/Ycf12, at least 3 peripheral proteins of the oxygen-evolving complex and a large number of cofactors. It forms dimeric complexes.

The protein localises to the plastid. The protein resides in the chloroplast thylakoid membrane. Functionally, found at the monomer-monomer interface of the photosystem II (PS II) dimer, plays a role in assembly and dimerization of PSII. PSII is a light-driven water plastoquinone oxidoreductase, using light energy to abstract electrons from H(2)O, generating a proton gradient subsequently used for ATP formation. This is Photosystem II reaction center protein T from Solanum lycopersicum (Tomato).